Reading from the N-terminus, the 136-residue chain is Nucleoside diphosphate kinase (136 aa).

ATP contacts are provided by K10, F58, R86, T92, R104, and N114. H117 functions as the Pros-phosphohistidine intermediate in the catalytic mechanism.

The protein belongs to the NDK family. Homotetramer. It depends on Mg(2+) as a cofactor.

It is found in the cytoplasm. The catalysed reaction is a 2'-deoxyribonucleoside 5'-diphosphate + ATP = a 2'-deoxyribonucleoside 5'-triphosphate + ADP. It catalyses the reaction a ribonucleoside 5'-diphosphate + ATP = a ribonucleoside 5'-triphosphate + ADP. Functionally, major role in the synthesis of nucleoside triphosphates other than ATP. The ATP gamma phosphate is transferred to the NDP beta phosphate via a ping-pong mechanism, using a phosphorylated active-site intermediate. This is Nucleoside diphosphate kinase from Mycolicibacterium gilvum (strain PYR-GCK) (Mycobacterium gilvum (strain PYR-GCK)).